A 361-amino-acid polypeptide reads, in one-letter code: dTDP-glucose 4,6-dehydratase (361 aa).

Residues 11-12 (FI), 32-35 (DKLT), 58-59 (DI), 80-84 (LAAES), and threonine 99 contribute to the NAD(+) site. Serine 84 serves as a coordination point for substrate. Residue threonine 133 participates in substrate binding. Residue aspartate 134 is the Proton donor of the active site. Catalysis depends on proton acceptor residues glutamate 135 and tyrosine 167. NAD(+) is bound at residue 167-171 (YSASK). Asparagine 196 serves as a coordination point for substrate. Position 197 (asparagine 197) interacts with NAD(+). Substrate-binding positions include 206 to 207 (KL), 222 to 224 (PIY), arginine 231, asparagine 266, 296 to 300 (DRPGH), and tyrosine 357.

It belongs to the NAD(P)-dependent epimerase/dehydratase family. dTDP-glucose dehydratase subfamily. As to quaternary structure, homodimer. NAD(+) serves as cofactor.

It carries out the reaction dTDP-alpha-D-glucose = dTDP-4-dehydro-6-deoxy-alpha-D-glucose + H2O. Its pathway is carbohydrate biosynthesis; dTDP-L-rhamnose biosynthesis. It functions in the pathway bacterial outer membrane biogenesis; LPS O-antigen biosynthesis. Functionally, catalyzes the dehydration of dTDP-D-glucose to form dTDP-6-deoxy-D-xylo-4-hexulose via a three-step process involving oxidation, dehydration and reduction. The protein is dTDP-glucose 4,6-dehydratase of Salmonella typhimurium (strain LT2 / SGSC1412 / ATCC 700720).